We begin with the raw amino-acid sequence, 230 residues long: Claudin-2 (230 aa).

The Cytoplasmic segment spans residues 1–7 (MASLGVQ). The helical transmembrane segment at 8–28 (LVGYILGLLGLLGTSIAMLLP) threads the bilayer. Over 29–81 (NWRTSSYVGASIVTAVGFSKGLWMECATHSTGITQCDIYSTLLGLPADIQAAQ) the chain is Extracellular. C54 and C64 are disulfide-bonded. Residues 82 to 102 (AMMVTSSAMSSLACIISVVGM) form a helical membrane-spanning segment. Residues 103 to 116 (RCTVFCQDSRAKDR) are Cytoplasmic-facing. A helical transmembrane segment spans residues 117–137 (VAVVGGVFFILGGILGFIPVA). Over 138–162 (WNLHGILRDFYSPLVPDSMKFEIGE) the chain is Extracellular. A helical transmembrane segment spans residues 163–183 (ALYLGIISALFSLVAGVILCF). Over 184 to 230 (SCSPQGNRTNYYDGYQAQPLATRSSPRSAQQPKAKSEFNSYSLTGYV) the chain is Cytoplasmic. Residues 205 to 230 (TRSSPRSAQQPKAKSEFNSYSLTGYV) form a disordered region. K218 participates in a covalent cross-link: Glycyl lysine isopeptide (Lys-Gly) (interchain with G-Cter in SUMO). Residues S219 and S223 each carry the phosphoserine modification. Positions 229–230 (YV) are interactions with TJP1, TJP2 and TJP3.

The protein belongs to the claudin family. Can form homo- and heteropolymers with other claudins to mediate paracellular barrier and channel functions of tight junctions in response to physiological stimuli. Homopolymers interact with CLDN3, but not CLDN1, homopolymers. Directly interacts with TJP1/ZO-1, TJP2/ZO-2 and TJP3/ZO-3. In terms of processing, the disulfide bond is necessary for pore formation, but is not required for correct protein trafficking. As to expression, expressed in the kidney, liver and intestine, with higher levels in the ileum than in the jejunum. Low levels in the brain. Expressed in colonic epithelium (at protein level). Expressed in the perivenous regions, bile ducts, and gallbladder epithelium (at protein level).

The protein localises to the cell junction. The protein resides in the tight junction. It is found in the cell membrane. It catalyses the reaction Na(+)(in) = Na(+)(out). It carries out the reaction K(+)(in) = K(+)(out). The catalysed reaction is Rb(+)(in) = Rb(+)(out). The enzyme catalyses Li(+)(in) = Li(+)(out). It catalyses the reaction Cs(+)(in) = Cs(+)(out). It carries out the reaction Ca(2+)(in) = Ca(2+)(out). The catalysed reaction is methylamine(out) = methylamine(in). The enzyme catalyses choline(out) = choline(in). It catalyses the reaction H2O(in) = H2O(out). The channel permeability is down-regulated at acidic pH. Its function is as follows. Forms paracellular channels: polymerizes in tight junction strands with cation- and water-selective channels through the strands, conveying epithelial permeability in a process known as paracellular tight junction permeability. In intestinal epithelium, allows for sodium and water fluxes from the peritoneal side to the lumen of the intestine to regulate nutrient absorption and clear enteric pathogens as part of mucosal immune response. In kidney, allows passive sodium and calcium reabsorption across proximal tubules from the lumen back to the bloodstream. In the hepatobiliary tract, allows paracellular water and cation fluxes in the hepatic perivenous areas and biliary epithelium to generate bile flow and maintain osmotic gradients. The polypeptide is Claudin-2 (Mus musculus (Mouse)).